The following is a 97-amino-acid chain: Mitochondrial import inner membrane translocase subunit Tim8 A (97 aa).

A Twin CX3C motif motif is present at residues 43 to 66 (CWEKCMDKPGPKLDSRAEACFVNC). Cystine bridges form between cysteine 43–cysteine 66 and cysteine 47–cysteine 62. A phosphoserine mark is found at serine 57, serine 87, serine 94, and serine 96.

Belongs to the small Tim family. In terms of assembly, heterohexamer; composed of 3 copies of TIMM8A and 3 copies of TIMM13, named soluble 70 kDa complex. Associates with the TIM22 complex, whose core is composed of TIMM22.

It localises to the mitochondrion inner membrane. Its function is as follows. Mitochondrial intermembrane chaperone that participates in the import and insertion of some multi-pass transmembrane proteins into the mitochondrial inner membrane. Also required for the transfer of beta-barrel precursors from the TOM complex to the sorting and assembly machinery (SAM complex) of the outer membrane. Acts as a chaperone-like protein that protects the hydrophobic precursors from aggregation and guide them through the mitochondrial intermembrane space. The TIMM8-TIMM13 complex mediates the import of proteins such as TIMM23, SLC25A12/ARALAR1 and SLC25A13/ARALAR2, while the predominant TIMM9-TIMM10 70 kDa complex mediates the import of much more proteins. The sequence is that of Mitochondrial import inner membrane translocase subunit Tim8 A (Timm8a) from Rattus norvegicus (Rat).